We begin with the raw amino-acid sequence, 441 residues long: uncharacterized protein (441 aa).

An N-terminal signal peptide occupies residues 1 to 23 (MSRKYLLSLLLVGALVISVVASG). The residue at position 24 (Cys24) is an N-acetylcysteine. Cys24 carries S-archaeol cysteine lipidation.

This sequence belongs to the bacterial solute-binding protein 1 family.

It is found in the cell membrane. Probably part of a binding-protein-dependent transport system PH1214/15/16. This is an uncharacterized protein from Pyrococcus horikoshii (strain ATCC 700860 / DSM 12428 / JCM 9974 / NBRC 100139 / OT-3).